A 623-amino-acid polypeptide reads, in one-letter code: Chaperone protein DnaK (623 aa).

Thr197 carries the post-translational modification Phosphothreonine; by autocatalysis. Residues Ala595–Asp615 are compositionally biased toward basic and acidic residues. Residues Ala595–Glu623 form a disordered region.

This sequence belongs to the heat shock protein 70 family.

In terms of biological role, acts as a chaperone. This chain is Chaperone protein DnaK, found in Campylobacter jejuni subsp. doylei (strain ATCC BAA-1458 / RM4099 / 269.97).